Reading from the N-terminus, the 96-residue chain is Co-chaperonin GroES (96 aa).

The protein belongs to the GroES chaperonin family. Heptamer of 7 subunits arranged in a ring. Interacts with the chaperonin GroEL.

The protein resides in the cytoplasm. Together with the chaperonin GroEL, plays an essential role in assisting protein folding. The GroEL-GroES system forms a nano-cage that allows encapsulation of the non-native substrate proteins and provides a physical environment optimized to promote and accelerate protein folding. GroES binds to the apical surface of the GroEL ring, thereby capping the opening of the GroEL channel. In Actinobacillus pleuropneumoniae serotype 5b (strain L20), this protein is Co-chaperonin GroES.